The primary structure comprises 497 residues: Squalene monooxygenase (497 aa).

Residues 29–30 (VV), 49–50 (ER), R57, R159, V175, D336, and M349 each bind FAD. The next 2 helical transmembrane spans lie at 434 to 454 (FLSG…TVAL) and 467 to 487 (LGFL…AKVF).

The protein belongs to the squalene monooxygenase family. FAD serves as cofactor.

Its subcellular location is the microsome membrane. It localises to the endoplasmic reticulum membrane. It carries out the reaction squalene + reduced [NADPH--hemoprotein reductase] + O2 = (S)-2,3-epoxysqualene + oxidized [NADPH--hemoprotein reductase] + H2O + H(+). Its pathway is terpene metabolism; lanosterol biosynthesis; lanosterol from farnesyl diphosphate: step 2/3. Functionally, catalyzes the stereospecific oxidation of squalene to (S)-2,3-epoxysqualene, and is considered to be a rate-limiting enzyme in steroid biosynthesis. This is Squalene monooxygenase (ERG1) from Eremothecium gossypii (strain ATCC 10895 / CBS 109.51 / FGSC 9923 / NRRL Y-1056) (Yeast).